We begin with the raw amino-acid sequence, 454 residues long: tRNA modification GTPase MnmE (454 aa).

Residues Arg-23, Glu-80, and Lys-120 each coordinate (6S)-5-formyl-5,6,7,8-tetrahydrofolate. Residues 216-377 (GMKVVIAGRP…LRNHLKQSMG (162 aa)) form the TrmE-type G domain. Residue Asn-226 coordinates K(+). Residues 226–231 (NAGKSS), 245–251 (TDIAGTT), 270–273 (DTAG), 335–338 (NKAD), and 358–360 (SAR) contribute to the GTP site. A Mg(2+)-binding site is contributed by Ser-230. Thr-245, Ile-247, and Thr-250 together coordinate K(+). Position 251 (Thr-251) interacts with Mg(2+). Lys-454 lines the (6S)-5-formyl-5,6,7,8-tetrahydrofolate pocket.

The protein belongs to the TRAFAC class TrmE-Era-EngA-EngB-Septin-like GTPase superfamily. TrmE GTPase family. As to quaternary structure, homodimer. Heterotetramer of two MnmE and two MnmG subunits. The cofactor is K(+).

The protein localises to the cytoplasm. Its function is as follows. Exhibits a very high intrinsic GTPase hydrolysis rate. Involved in the addition of a carboxymethylaminomethyl (cmnm) group at the wobble position (U34) of certain tRNAs, forming tRNA-cmnm(5)s(2)U34. This Enterobacter sp. (strain 638) protein is tRNA modification GTPase MnmE.